We begin with the raw amino-acid sequence, 383 residues long: Na(+)/H(+) antiporter NhaA (383 aa).

The next 11 helical transmembrane spans lie at A14–L34, F47–I67, I87–F107, G117–G137, V146–F166, L171–A191, A205–I225, V252–V272, M280–F300, I321–L341, and L356–S376.

It belongs to the NhaA Na(+)/H(+) (TC 2.A.33) antiporter family.

It localises to the cell inner membrane. The enzyme catalyses Na(+)(in) + 2 H(+)(out) = Na(+)(out) + 2 H(+)(in). Functionally, na(+)/H(+) antiporter that extrudes sodium in exchange for external protons. In Vibrio alginolyticus, this protein is Na(+)/H(+) antiporter NhaA.